Here is a 329-residue protein sequence, read N- to C-terminus: Aurora kinase B (329 aa).

The segment covering 1 to 14 (MTLSRAKHANRNHL) has biased composition (basic residues). Residues 1 to 21 (MTLSRAKHANRNHLPHLLAKV) form a disordered region. A Protein kinase domain is found at 53–305 (FEMGAHLGRG…LVDVMTHYWV (253 aa)). Residues 59–67 (LGRGKFGRV) and lysine 82 contribute to the ATP site. Catalysis depends on aspartate 178, which acts as the Proton acceptor.

It belongs to the protein kinase superfamily. Ser/Thr protein kinase family. Aurora subfamily. As to quaternary structure, interacts with Incenp and Cdc37. The cofactor is Mg(2+).

The protein resides in the chromosome. It localises to the cytoplasm. The protein localises to the cytoskeleton. It is found in the midbody. The catalysed reaction is L-seryl-[protein] + ATP = O-phospho-L-seryl-[protein] + ADP + H(+). It catalyses the reaction L-threonyl-[protein] + ATP = O-phospho-L-threonyl-[protein] + ADP + H(+). Serine/threonine-protein kinase that mediates both meiotic and mitotic chromosome segregation. Required for histone H3 'Ser-10' phosphorylation. Phosphorylates mei-S332 within residues 124-126 and stabilizes its association with centromeres during meiosis. May regulate the function of the ESCRT-III complex core component shrb during abscission of germline cells in oogenesis. The protein is Aurora kinase B of Drosophila melanogaster (Fruit fly).